A 386-amino-acid chain; its full sequence is uncharacterized protein (386 aa).

2 helical membrane passes run 54–74 and 347–367; these read AVLQ…AIVA and LLGG…PIAG.

To M.tuberculosis Rv0628c.

Its subcellular location is the cell membrane. This is an uncharacterized protein from Mycobacterium tuberculosis (strain CDC 1551 / Oshkosh).